The sequence spans 546 residues: Immunoglobulin-like domain-containing receptor 1 (546 aa).

The first 23 residues, 1–23 (MAWPKLPAPWLLLCTWLPAGCLS), serve as a signal peptide directing secretion. An Ig-like V-type domain is found at 24–162 (LLVTVQHTER…TSGDPDKEVK (139 aa)). Topologically, residues 24-167 (LLVTVQHTER…DKEVKLIVLH (144 aa)) are extracellular. The cysteines at positions 45 and 145 are disulfide-linked. Residues 168-188 (WLTVIFIILGALLLLLLIGVC) form a helical membrane-spanning segment. The Cytoplasmic segment spans residues 189 to 546 (WCQCCPQYCC…SSHSGRSVVI (358 aa)). The disordered stretch occupies residues 399–546 (WSGRHRSSRL…SSHSGRSVVI (148 aa)). Over residues 442–457 (RCQERPRRPSPRESTQ) the composition is skewed to basic and acidic residues. The segment covering 458–467 (RHGRRRRHRS) has biased composition (basic residues). Ser499 and Ser501 each carry phosphoserine. Basic and acidic residues predominate over residues 527–539 (GSVERRSEKDSSH).

It belongs to the immunoglobulin superfamily. LISCH7 family. In terms of assembly, homooligomer. Interacts with MARVELD2 and OCLN; the interaction is required to recruit MARVELD2 to tricellular contacts. Interacts (via C-terminus) with TRA2A, TRA2B and SRSF1. Interacts with PLSCR1. In terms of tissue distribution, mainly expressed in prostate and to a lower extent in testis, pancreas, kidney, heart and liver.

The protein localises to the cell membrane. It localises to the cell junction. The protein resides in the tight junction. It is found in the cytoplasm. Its subcellular location is the cytosol. In terms of biological role, maintains epithelial barrier function by recruiting MARVELD2/tricellulin to tricellular tight junctions (tTJs). Crucial for normal hearing by maintaining the structural and functional integrity of tTJs, which are critical for the survival of auditory neurosensory HCs. Mediates fatty acids and lipoproteins-stimulated CCK/cholecystokinin secretion in the small intestine. In the inner ear, may regulate alternative pre-mRNA splicing via binding to TRA2A, TRA2B and SRSF1. Its function is as follows. (Microbial infection) Promotes influenza virus infection by inhibiting viral nucleoprotein NP binding to PLSCR1 and thereby PLSCR1-mediated antiviral activity. The chain is Immunoglobulin-like domain-containing receptor 1 from Homo sapiens (Human).